The sequence spans 130 residues: Small ribosomal subunit protein uS9 (130 aa).

It belongs to the universal ribosomal protein uS9 family.

This is Small ribosomal subunit protein uS9 from Methylibium petroleiphilum (strain ATCC BAA-1232 / LMG 22953 / PM1).